The chain runs to 310 residues: uncharacterized protein (310 aa).

The interval 1–70 is disordered; sequence MAGNSQRRGA…ARGRTDETET (70 aa). A compositionally biased stretch (basic residues) spans 49–62; it reads AAKRAKAQQRRPAR. Positions 262, 282, and 291 each coordinate S-adenosyl-L-methionine.

This sequence belongs to the class IV-like SAM-binding methyltransferase superfamily. RNA methyltransferase TrmH family.

This is an uncharacterized protein from Mycobacterium ulcerans (strain Agy99).